A 732-amino-acid polypeptide reads, in one-letter code: MKSLPFPSPSRDLAGDSAQSLLLAARLHAPGSYLGIHSVPGGELVRVFQPYMSRVWLQTSSGFQVMECTHDAGIFEWKGEAVTRPYLLRLEHAETGVIEERYDPYAFPVQISGHDLYLFNEGRLLQAYHMLGTHQVKNQGVTGTRFAVWAPNAERVSVVGDFNHWDGRVCPMMARDHSGVWELFIPDLPGGTLYKYEIRNHSTGEILLKTDPYATRYELRPNNAALTPVESRYEWQDNDWMVQRAGWDWLHAPVNIYELHVGSWKRHPDGSFYSYQELADHLIPYLQEMGYSHVELLPISEHPLDESWGYQVTGYFAATSRYGNPEAFMYFVDKCHQAGIGVILDWVPAHFPQDSFSLARFDGTALYEHEDPRLGYHQDWGTYIFNYGRSEVKSFLLSSAHYWLSVFHIDGLRVDAVASMLYLDYSRKEGEWLPNRFGGRENLDAIDFLRELNTMVHGEFSGALTFAEESTSWPAVSRPTYLGGLGFSMKWNMGWMNDTLNYMQLDPIHRHYHHNELTFNQLYAYTENFILPLSHDEVVHGKKSLLDKMSGDVWQMFANLRLLFTYQMTCPGKKINFMGNEFAQGREWRVNHELDWYLLERDPHRGIQMLLRNLNHLYLDTPALHELDFFTEGFSWIDCHDSEQSVISYQRRARDGSFMLVILNFTPVPRTGYRVGVPESRTYQEVFNSDSTYYGGSNIGNPGDIVPTGQQWSGQVDSIIITLPPLAGIILI.

Asp-415 serves as the catalytic Nucleophile. Glu-468 serves as the catalytic Proton donor.

Belongs to the glycosyl hydrolase 13 family. GlgB subfamily. In terms of assembly, monomer.

It carries out the reaction Transfers a segment of a (1-&gt;4)-alpha-D-glucan chain to a primary hydroxy group in a similar glucan chain.. The protein operates within glycan biosynthesis; glycogen biosynthesis. In terms of biological role, catalyzes the formation of the alpha-1,6-glucosidic linkages in glycogen by scission of a 1,4-alpha-linked oligosaccharide from growing alpha-1,4-glucan chains and the subsequent attachment of the oligosaccharide to the alpha-1,6 position. This Nitrosomonas eutropha (strain DSM 101675 / C91 / Nm57) protein is 1,4-alpha-glucan branching enzyme GlgB.